We begin with the raw amino-acid sequence, 462 residues long: Coagulation factor IX (462 aa).

Residues 1–21 (MADAPGLIPIFLLGYLLSTEC) form the signal peptide. Positions 22–39 (AVFLDRENATKILTRPKR) are excised as a propeptide. Residues Y40, N41, E46, E47, E54, E56, E59, E60, E65, E66, and E69 each coordinate Ca(2+). Positions 40–86 (YNSGKLEEFVQGNLERECIEERCSFEEAREVFENTEKTTEFWKQYVD) constitute a Gla domain. Residues E46, E47, E54, E56, E59, E60, E65, E66, E69, E72, and E75 each carry the 4-carboxyglutamate modification. E54 contributes to the Mg(2+) binding site. A disulfide bridge links C57 with C62. E59 serves as a coordination point for Mg(2+). E65 serves as a coordination point for Mg(2+). E69 contributes to the Mg(2+) binding site. E75 is a Ca(2+) binding site. E75 is a binding site for Mg(2+). O-linked (GalNAc...) threonine glycosylation occurs at T78. Positions 79, 86, 87, and 89 each coordinate Ca(2+). Position 79 is a 4-carboxyglutamate (E79). Residue E79 participates in Mg(2+) binding. Residues 86–122 (DGDQCESNPCLNGGICKDDINSYECWCQAGFEGRNCE) enclose the EGF-like; calcium-binding domain. 10 disulfide bridges follow: C90–C101, C95–C110, C112–C121, C127–C138, C134–C148, C150–C163, C171–C336, C253–C269, C383–C397, and C408–C436. O-linked (Glc...) serine glycosylation occurs at S92. 2 residues coordinate Ca(2+): D103 and D104. D103 is modified ((3R)-3-hydroxyaspartate). S107 bears the Phosphoserine mark. A propeptide spans 186-227 (AETVFSNTDYGNSTELILDDITNSTILDNLTENSEPINDFTR) (activation peptide). Y195 is modified (sulfotyrosine). The residue at position 198 (S198) is a Phosphoserine. T199 is subject to Phosphothreonine; alternate. T199 carries O-linked (GalNAc...) threonine; alternate glycosylation. N-linked (GlcNAc...) asparagine glycosylation is found at N208 and N214. T216 and T226 each carry an O-linked (GalNAc...) threonine glycan. Positions 228–460 (VVGGENAKPG…YVNWIKEKTK (233 aa)) constitute a Peptidase S1 domain. The Charge relay system role is filled by H268. E282, N284, E287, E289, and E292 together coordinate Ca(2+). A glycan (N-linked (GlcNAc...) asparagine) is linked at N307. The Charge relay system role is filled by D316. Catalysis depends on S412, which acts as the Charge relay system.

The protein belongs to the peptidase S1 family. As to quaternary structure, heterodimer of a light chain and a heavy chain; disulfide-linked. Interacts (inactive and activated) with F11 (activated) in calcium-dependent manner. Interacts with SERPINC1. Interacts (inactive and activated) with nitrophorin-2, an anticoagulant protein from Rhodnius prolixus. Post-translationally, activated by factor XIa, which excises the activation peptide. The propeptide can also be removed by snake venom protease. Activated by coagulation factor VIIa-tissue factor (F7-F3) complex in calcium-dependent manner. The iron and 2-oxoglutarate dependent 3-hydroxylation of aspartate and asparagine is (R) stereospecific within EGF domains. In terms of processing, predominantly O-glucosylated at Ser-92 by POGLUT1 in vitro.

The protein resides in the secreted. It catalyses the reaction Selective cleavage of Arg-|-Ile bond in factor X to form factor Xa.. Functionally, factor IX is a vitamin K-dependent plasma protein that participates in the intrinsic pathway of blood coagulation by converting factor X to its active form in the presence of Ca(2+) ions, phospholipids, and factor VIIIa. This chain is Coagulation factor IX (F9), found in Rattus norvegicus (Rat).